A 180-amino-acid polypeptide reads, in one-letter code: ATP-dependent protease subunit HslV (180 aa).

Residue Thr5 is part of the active site. Residues Gly161, Cys164, and Thr167 each coordinate Na(+).

The protein belongs to the peptidase T1B family. HslV subfamily. As to quaternary structure, a double ring-shaped homohexamer of HslV is capped on each side by a ring-shaped HslU homohexamer. The assembly of the HslU/HslV complex is dependent on binding of ATP.

It localises to the cytoplasm. The catalysed reaction is ATP-dependent cleavage of peptide bonds with broad specificity.. With respect to regulation, allosterically activated by HslU binding. In terms of biological role, protease subunit of a proteasome-like degradation complex believed to be a general protein degrading machinery. In Campylobacter fetus subsp. fetus (strain 82-40), this protein is ATP-dependent protease subunit HslV.